A 368-amino-acid polypeptide reads, in one-letter code: 1-deoxy-D-xylulose 5-phosphate reductoisomerase (368 aa).

NADPH contacts are provided by Thr-10, Gly-11, Ser-12, Ile-13, Gln-38, and Asn-100. Lys-101 is a binding site for 1-deoxy-D-xylulose 5-phosphate. Glu-102 is an NADPH binding site. Asp-125 is a Mn(2+) binding site. Positions 126, 127, 151, and 172 each coordinate 1-deoxy-D-xylulose 5-phosphate. Residue Glu-127 coordinates Mn(2+). An NADPH-binding site is contributed by Gly-178. Residues Ser-185, Asn-190, Lys-191, and Glu-194 each coordinate 1-deoxy-D-xylulose 5-phosphate. Residue Glu-194 participates in Mn(2+) binding.

It belongs to the DXR family. It depends on Mg(2+) as a cofactor. Mn(2+) serves as cofactor.

The enzyme catalyses 2-C-methyl-D-erythritol 4-phosphate + NADP(+) = 1-deoxy-D-xylulose 5-phosphate + NADPH + H(+). The protein operates within isoprenoid biosynthesis; isopentenyl diphosphate biosynthesis via DXP pathway; isopentenyl diphosphate from 1-deoxy-D-xylulose 5-phosphate: step 1/6. Catalyzes the NADPH-dependent rearrangement and reduction of 1-deoxy-D-xylulose-5-phosphate (DXP) to 2-C-methyl-D-erythritol 4-phosphate (MEP). The polypeptide is 1-deoxy-D-xylulose 5-phosphate reductoisomerase (Tropheryma whipplei (strain Twist) (Whipple's bacillus)).